Here is a 224-residue protein sequence, read N- to C-terminus: MAPSQAPSRDRAGQEDEDRWEARGDRKARKPLVEKKRRARINESLQELRLLLAGTEVQAKLENAEVLELTVRRVQGALRGRAREREQLQAEASERFAAGYIQCMHEVHTFVSTCQAIDATVSAELLNHLLESMPLREGSSFQDLLGDSLAGLPGGSGRSSWPPGGSPESPLSSPPGPGDDLCSDLEEIPEAELNRVPAEGPDLVSTSLGSLTAARRAQSVWRPW.

Residues 1–31 (MAPSQAPSRDRAGQEDEDRWEARGDRKARKP) form a disordered region. A compositionally biased stretch (basic and acidic residues) spans 8 to 25 (SRDRAGQEDEDRWEARGD). The region spanning 25 to 77 (DRKARKPLVEKKRRARINESLQELRLLLAGTEVQAKLENAEVLELTVRRVQGA) is the bHLH domain. Residues 96–129 (FAAGYIQCMHEVHTFVSTCQAIDATVSAELLNHL) form the Orange domain. Positions 146 to 209 (GDSLAGLPGG…GPDLVSTSLG (64 aa)) are disordered. Residues 158 to 171 (RSSWPPGGSPESPL) are compositionally biased toward low complexity. The segment covering 181-190 (LCSDLEEIPE) has biased composition (acidic residues). A WRPW motif motif is present at residues 221-224 (WRPW).

In terms of assembly, transcription repression requires formation of a complex with a corepressor protein of the Groucho/TLE family. Interacts with HES1. Expressed in both undifferentiated and differentiated cells. High levels of expression are observed in several embryonic tissues including the nervous system, muscle and thymus. In the nervous system, initially expressed in the closing neural tube, then in the spinal cord, cranial and dorsal root ganglia, and brain neuroepithelium. Also expressed in epithelial cells of the embryonic respiratory, urinary and digestive systems. In the limb buds, expressed in skeletal muscle and presumptive tendons.

The protein localises to the nucleus. Functionally, does not bind DNA itself but suppresses both HES1-mediated N box-dependent transcriptional repression and binding of HES1 to E box sequences. Also suppresses HES1-mediated inhibition of the heterodimer formed by ASCL1/MASH1 and TCF3/E47, allowing ASCL1 and TCF3 to up-regulate transcription in its presence. Promotes cell differentiation. The polypeptide is Transcription cofactor HES-6 (Mus musculus (Mouse)).